Reading from the N-terminus, the 520-residue chain is Ribonuclease Y (520 aa).

Residues 5-25 form a helical membrane-spanning segment; it reads ITIISSLLFLIVGLVVGSLIF. The tract at residues 76–127 is disordered; sequence ELRGRRTETQKAENRLLQREENLDRKDTSLSKREATLERKEESISKRQQQIE. The KH domain occupies 210–273; it reads TVSVVTLPND…EIARIALEKL (64 aa). Positions 336–429 constitute an HD domain; it reads VLNHSLEVSK…VAAADALSAA (94 aa).

Belongs to the RNase Y family.

Its subcellular location is the cell membrane. In terms of biological role, endoribonuclease that initiates mRNA decay. The sequence is that of Ribonuclease Y from Listeria monocytogenes serotype 1/2a (strain 10403S).